The following is a 239-amino-acid chain: Derlin-2 (239 aa).

The Cytoplasmic portion of the chain corresponds to 1 to 57 (MAYQSLRLEYLQIPPVSRAYTTACVLTTAAVQLELITPFQLYFNPELIFKHFQIWRL). The helical transmembrane segment at 58–78 (ITNFLFFGPVGFNFLFNMIFL) threads the bilayer. Over 79–96 (YRYCRMLEEGSFRGRTAD) the chain is Lumenal. A helical transmembrane segment spans residues 97-117 (FVFMFLFGGFLMTLFGLFVSL). The Cytoplasmic portion of the chain corresponds to 118-150 (VFLGQAFTIMLVYVWSRRNPYVRMNFFGLLNFQ). The helical transmembrane segment at 151-171 (APFLPWVLMGFSLLLGNSIIV) threads the bilayer. Residue aspartate 172 is a topological domain, lumenal. Residues 173–193 (LLGIAVGHIYFFLEDIFPNQP) traverse the membrane as a helical segment. The Cytoplasmic segment spans residues 194 to 239 (GGIRILKTPSILRTIFDTPDEDPNYNPLPEERPGGFAWGEGQRLGG). Residues 214–239 (EDPNYNPLPEERPGGFAWGEGQRLGG) are disordered. The span at 229–239 (FAWGEGQRLGG) shows a compositional bias: gly residues.

The protein belongs to the derlin family. As to quaternary structure, forms homo- and heterooligomers with DERL3 and, to a lesser extent, with DERL1. Interacts with the SEL1L/SYVN1 and VCP/SELENOS protein complexes. Mediates association between VCP and EDEM1, as well as that between VCP and the misfolded glycoproteins. Interacts with OS9. Interacts with SELENOK and SELENOS. Interacts with the signal recognition particle/SRP and the SRP receptor; in the process of endoplasmic reticulum stress-induced pre-emptive quality control. Interacts with CCDC47. Widely expressed, with lowest levels in brain and heart.

It localises to the endoplasmic reticulum membrane. In terms of biological role, functional component of endoplasmic reticulum-associated degradation (ERAD) for misfolded lumenal glycoproteins, but not that of misfolded nonglycoproteins. May act by forming a channel that allows the retrotranslocation of misfolded glycoproteins into the cytosol where they are ubiquitinated and degraded by the proteasome. May mediate the interaction between VCP and misfolded glycoproteins. May also be involved in endoplasmic reticulum stress-induced pre-emptive quality control, a mechanism that selectively attenuates the translocation of newly synthesized proteins into the endoplasmic reticulum and reroutes them to the cytosol for proteasomal degradation. The sequence is that of Derlin-2 from Mus musculus (Mouse).